We begin with the raw amino-acid sequence, 232 residues long: tRNA (guanine-N(7)-)-methyltransferase (232 aa).

The S-adenosyl-L-methionine site is built by E63, E88, D115, and D137. D137 is a catalytic residue. Substrate contacts are provided by residues K141, D173, and 211 to 214 (TRYE).

It belongs to the class I-like SAM-binding methyltransferase superfamily. TrmB family.

The enzyme catalyses guanosine(46) in tRNA + S-adenosyl-L-methionine = N(7)-methylguanosine(46) in tRNA + S-adenosyl-L-homocysteine. Its pathway is tRNA modification; N(7)-methylguanine-tRNA biosynthesis. Functionally, catalyzes the formation of N(7)-methylguanine at position 46 (m7G46) in tRNA. The polypeptide is tRNA (guanine-N(7)-)-methyltransferase (Rhizobium meliloti (strain 1021) (Ensifer meliloti)).